The primary structure comprises 145 residues: D-aminoacyl-tRNA deacylase (145 aa).

The Gly-cisPro motif, important for rejection of L-amino acids signature appears at 137–138 (GP).

The protein belongs to the DTD family. In terms of assembly, homodimer.

Its subcellular location is the cytoplasm. It carries out the reaction glycyl-tRNA(Ala) + H2O = tRNA(Ala) + glycine + H(+). The catalysed reaction is a D-aminoacyl-tRNA + H2O = a tRNA + a D-alpha-amino acid + H(+). Its function is as follows. An aminoacyl-tRNA editing enzyme that deacylates mischarged D-aminoacyl-tRNAs. Also deacylates mischarged glycyl-tRNA(Ala), protecting cells against glycine mischarging by AlaRS. Acts via tRNA-based rather than protein-based catalysis; rejects L-amino acids rather than detecting D-amino acids in the active site. By recycling D-aminoacyl-tRNA to D-amino acids and free tRNA molecules, this enzyme counteracts the toxicity associated with the formation of D-aminoacyl-tRNA entities in vivo and helps enforce protein L-homochirality. This chain is D-aminoacyl-tRNA deacylase, found in Salmonella choleraesuis (strain SC-B67).